Reading from the N-terminus, the 619-residue chain is Sodium-dependent dopamine transporter (619 aa).

Over 1-56 (MSKSKCSVGPMSSVVAPAKESNAVGPREVELILVKEQNGVQLTNSTLINPPQTPVE) the chain is Cytoplasmic. Residues 57–95 (AQERETWSKKIDFLLSVIGFAVDLANVWRFPYLCYKNGG) traverse the membrane as a discontinuously helical segment. Residues Gly75, Ala77, Val78, Asp79, and Asn82 each coordinate Na(+). Asp79 serves as a coordination point for dopamine. 2 consecutive transmembrane segments (helical) span residues 96 to 127 (GAFLVPYLLFMVIAGMPLFYMELALGQFNREG) and 128 to 171 (AAGV…FSSF). Dopamine-binding residues include Ser149 and Gly153. Over 172–235 (TMDLPWIHCN…SRGIDDLGPP (64 aa)) the chain is Extracellular. Cysteines 180 and 189 form a disulfide. 4 N-linked (GlcNAc...) asparagine glycosylation sites follow: Asn181, Asn188, Asn196, and Asn204. Transmembrane regions (helical) follow at residues 236–255 (RWQLTACLVLVIVLLYFSLW) and 256–286 (KGVKTSGKVVWITATMPYVVLTALLLRGVTL). Residues 287 to 305 (PGAMDGIRAYLSVDFYRLC) are Extracellular-facing. Residues 306–334 (EASVWIDAATQVCFSLGVGFGVLIAFSSY) traverse the membrane as a discontinuously helical segment. Chloride is bound at residue Gln316. Phe319 contacts dopamine. Positions 320 and 352 each coordinate Na(+). Ser320 serves as a coordination point for chloride. Residues 335–375 (NKFTNNCYRDAIITTSINSLTSFSSGFVVFSFLGYMAQKHN) form a helical membrane-spanning segment. Residue Ser356 coordinates chloride. Residues 376-399 (VPIRDVATDGPGLIFIIYPEAIAT) are Extracellular-facing. A run of 3 helical transmembrane segments spans residues 400 to 441 (LPLS…QLLH), 442 to 465 (RHRELFTLGIVLATFLLSLFCVTN), and 466 to 498 (GGIYVFTLLDHFAAGTSILFGVLIEAIGVAWFY). Leu417, Asp420, and Ser421 together coordinate Na(+). Dopamine contacts are provided by Ser421 and Ala422. The Cytoplasmic portion of the chain corresponds to 499-515 (GVQQFSDDIKQMTGQRP). A helical transmembrane segment spans residues 516–541 (NLYWRLCWKLVSPCFLLYVVVVSIVT). Residues 542–552 (FRPPHYGAYIF) lie on the Extracellular side of the membrane. A helical transmembrane segment spans residues 553–582 (PDWANALGWIIATSSMAMVPIYATYKFCSL). The interval 560-589 (GWIIATSSMAMVPIYATYKFCSLPGSFREK) is interaction with TGFB1I1. Residues 583 to 619 (PGSFREKLAYAITPEKDHQLVDRGEVRQFTLRHWLLL) lie on the Cytoplasmic side of the membrane.

Belongs to the sodium:neurotransmitter symporter (SNF) (TC 2.A.22) family. SLC6A3 subfamily. In terms of assembly, monomer. Homooligomer; disulfide-linked. Interacts with PRKCABP and TGFB1I1. Interacts (via N-terminus) with SYNGR3 (via N-terminus). Interacts with SLC18A2. Interacts with TOR1A (ATP-bound); TOR1A regulates SLC6A3 subcellular location. Interacts with alpha-synuclein/SNCA. Interacts with SEPTIN4. In terms of tissue distribution, brain. Expressed in the substantia nigra and ventral tegmental area, regions that contain dopaminergic cell bodies.

It is found in the cell membrane. The protein localises to the cell projection. Its subcellular location is the neuron projection. The protein resides in the axon. It catalyses the reaction dopamine(out) + chloride(out) + Na(+)(out) = dopamine(in) + chloride(in) + Na(+)(in). The enzyme catalyses (R)-noradrenaline(out) + chloride(out) + Na(+)(out) = (R)-noradrenaline(in) + chloride(in) + Na(+)(in). The catalysed reaction is dopamine(out) + chloride(out) + 2 Na(+)(out) = dopamine(in) + chloride(in) + 2 Na(+)(in). Its activity is regulated as follows. Inhibited by mazindol, cocaine, desipramine, GBR 12783 dihydrochloride, GBR 12909 dihydrochloride and nomifensine. Inhibited by zinc ions. Its function is as follows. Mediates sodium- and chloride-dependent transport of dopamine. Also mediates sodium- and chloride-dependent transport of norepinephrine (also known as noradrenaline). Regulator of light-dependent retinal hyaloid vessel regression, downstream of OPN5 signaling. The sequence is that of Sodium-dependent dopamine transporter (Slc6a3) from Rattus norvegicus (Rat).